Consider the following 247-residue polypeptide: Uridylate kinase (247 aa).

19–22 contributes to the ATP binding site; that stretch reads KISG. Glycine 61 is a binding site for UMP. Glycine 62 and arginine 66 together coordinate ATP. UMP contacts are provided by residues aspartate 81 and 142 to 149; that span reads TGNPFFTT. 4 residues coordinate ATP: threonine 169, glutamine 170, tyrosine 175, and aspartate 178.

It belongs to the UMP kinase family. As to quaternary structure, homohexamer.

The protein resides in the cytoplasm. The catalysed reaction is UMP + ATP = UDP + ADP. The protein operates within pyrimidine metabolism; CTP biosynthesis via de novo pathway; UDP from UMP (UMPK route): step 1/1. Its activity is regulated as follows. Inhibited by UTP. Catalyzes the reversible phosphorylation of UMP to UDP. The protein is Uridylate kinase of Wolbachia pipientis wMel.